The chain runs to 406 residues: Riboflavin biosynthesis protein RibBA (406 aa).

The interval 1–209 (MSEREEFKFN…IADLIKYRLR (209 aa)) is DHBP synthase. D-ribulose 5-phosphate is bound by residues 33–34 (RE), Asp38, 148–152 (RAGHT), and Glu172. Glu34 contacts Mg(2+). His151 is a Mg(2+) binding site. Residues 210–406 (RETLVEKVAS…VKKDKLGHMF (197 aa)) are GTP cyclohydrolase II. 260–264 (RVHSE) provides a ligand contact to GTP. Positions 265, 276, and 278 each coordinate Zn(2+). GTP is bound by residues Gln281, 304 to 306 (EGR), and Thr326. The active-site Proton acceptor; for GTP cyclohydrolase activity is Asp338. The active-site Nucleophile; for GTP cyclohydrolase activity is the Arg340. GTP contacts are provided by Thr361 and Lys366.

In the N-terminal section; belongs to the DHBP synthase family. It in the C-terminal section; belongs to the GTP cyclohydrolase II family. It depends on Mg(2+) as a cofactor. Mn(2+) serves as cofactor. Zn(2+) is required as a cofactor.

The enzyme catalyses D-ribulose 5-phosphate = (2S)-2-hydroxy-3-oxobutyl phosphate + formate + H(+). It catalyses the reaction GTP + 4 H2O = 2,5-diamino-6-hydroxy-4-(5-phosphoribosylamino)-pyrimidine + formate + 2 phosphate + 3 H(+). Its pathway is cofactor biosynthesis; riboflavin biosynthesis; 2-hydroxy-3-oxobutyl phosphate from D-ribulose 5-phosphate: step 1/1. The protein operates within cofactor biosynthesis; riboflavin biosynthesis; 5-amino-6-(D-ribitylamino)uracil from GTP: step 1/4. Its function is as follows. Catalyzes the conversion of D-ribulose 5-phosphate to formate and 3,4-dihydroxy-2-butanone 4-phosphate. Functionally, catalyzes the conversion of GTP to 2,5-diamino-6-ribosylamino-4(3H)-pyrimidinone 5'-phosphate (DARP), formate and pyrophosphate. This Aquifex aeolicus (strain VF5) protein is Riboflavin biosynthesis protein RibBA.